The following is a 155-amino-acid chain: Protein SprT-like (155 aa).

The 138-residue stretch at 7–144 (QRHMEEVSLQ…CGSCGGKLKQ (138 aa)) folds into the SprT-like domain. His67 contacts Zn(2+). Glu68 is an active-site residue. His71 contacts Zn(2+).

This sequence belongs to the SprT family. Zn(2+) serves as cofactor.

The protein resides in the cytoplasm. The sequence is that of Protein SprT-like from Listeria welshimeri serovar 6b (strain ATCC 35897 / DSM 20650 / CCUG 15529 / CIP 8149 / NCTC 11857 / SLCC 5334 / V8).